Here is a 639-residue protein sequence, read N- to C-terminus: Zinc finger protein ZIC 5 (639 aa).

4 disordered regions span residues 113–171, 189–251, 323–355, and 379–409; these read PCGG…GHSR, HGAP…GHPH, PGPH…HLPG, and PDEL…PCSK. The segment covering 124 to 150 has biased composition (pro residues); sequence SAPPPPAPPLPPTPSPPPPPPPPPPPA. Composition is skewed to pro residues over residues 331–343 and 385–401; these read APPP…PAPA and LPPP…PPPA. Residues 434 to 461 form a C2H2-type 1; atypical zinc finger; the sequence is HVCFWEDCPREGKPFKAKYKLINHIRVH. C2H2-type zinc fingers lie at residues 467-491, 497-521, and 527-551; these read FPCP…KRTH, FKCE…SHVH, and YYCK…MKIH. The interval 548–568 is disordered; the sequence is MKIHCKSPPPSPGPLGYSSVG. Phosphoserine is present on residues Ser-554, Ser-558, and Ser-576. The segment at 607-639 is disordered; it reads APSHLHTPSSNGTTSETEDEEIYGNPEVVRTIH. Residues 612-621 show a composition bias toward polar residues; it reads HTPSSNGTTS.

It belongs to the GLI C2H2-type zinc-finger protein family.

It localises to the nucleus. Essential for neural crest development, converting cells from an epidermal fate to a neural crest cell fate. Binds to DNA. This Homo sapiens (Human) protein is Zinc finger protein ZIC 5 (ZIC5).